We begin with the raw amino-acid sequence, 103 residues long: Urease subunit beta (103 aa).

Belongs to the urease beta subunit family. In terms of assembly, heterotrimer of UreA (gamma), UreB (beta) and UreC (alpha) subunits. Three heterotrimers associate to form the active enzyme.

It is found in the cytoplasm. The catalysed reaction is urea + 2 H2O + H(+) = hydrogencarbonate + 2 NH4(+). It participates in nitrogen metabolism; urea degradation; CO(2) and NH(3) from urea (urease route): step 1/1. The protein is Urease subunit beta of Streptomyces coelicolor (strain ATCC BAA-471 / A3(2) / M145).